A 130-amino-acid chain; its full sequence is MKLKGKGVGKNIVEGEVIVSKKPLSFLGGVDPETGIIIDPDSDIKGESIEGKILVFPKGRGSTVGSYVIYALSRNGKAPKAIIVEEAEPIVTVGAIISGIPLIAGVDISKLRTGMKVRINPRTGEVEIIG.

The active-site Proton acceptor is the serine 62.

This sequence belongs to the AcnX type II small subunit family. In terms of assembly, heterodimer composed of a large subunit (PMDh-L) and a small subunit (PMDh-S).

It carries out the reaction (R)-5-phosphomevalonate = (2E)-3-methyl-5-phosphooxypent-2-enoate + H2O. It functions in the pathway isoprenoid biosynthesis; isopentenyl diphosphate biosynthesis via mevalonate pathway. Its function is as follows. Component of a hydro-lyase that catalyzes the dehydration of mevalonate 5-phosphate (MVA5P) to form trans-anhydromevalonate 5-phosphate (tAHMP). Involved in the archaeal mevalonate (MVA) pathway, which provides fundamental precursors for isoprenoid biosynthesis, such as isopentenyl diphosphate (IPP) and dimethylallyl diphosphate (DMAPP). This chain is Phosphomevalonate dehydratase small subunit, found in Pyrococcus abyssi (strain GE5 / Orsay).